We begin with the raw amino-acid sequence, 1088 residues long: DNA damage-binding protein 1a (1088 aa).

The protein belongs to the DDB1 family. Component of the CDD complex, at least composed of COP10, DET1 and DDB1A. Component of the CUL4-RBX1-CDD complex. Component of the CUL4-RBX1-DDB1-PRL1 E3 ubiquitin-protein ligase complex. Component of the UV-DDB complex, which is composed of DDB1A and DDB2. Interacts with RAE1. Interacts with WDR55. Interacts with ATCSA-1. Interacts with DDA1. Binds to ASG2; the subcellular localization of this complex depends on ASG2 farnesylation status. Binds to KTN80.2/DWA3. Interacts with HTD1. Interacts directly with DHU1.

The protein localises to the cytoplasm. Its subcellular location is the nucleus. The protein operates within protein modification; protein ubiquitination. Functionally, component of light signal transduction machinery. Involved in repression of photomorphogenesis in darkness by participating in the CDD complex, a complex probably required to regulate the activity of ubiquitin conjugating enzymes (E2s). Repression of photomorphogenesis is probably mediated by ubiquitination and subsequent degradation of photomorphogenesis-promoting factors such as HY5, HYH and LAF1. Plays a role in DNA repair by forming with DDB2 the UV-damaged DNA-binding protein complex (UV-DDB). Component of the CUL4-RBX1-DDB1-PRL1 E3 ubiquitin-protein ligase complex. The sequence is that of DNA damage-binding protein 1a from Arabidopsis thaliana (Mouse-ear cress).